The primary structure comprises 183 residues: Large ribosomal subunit protein uL5 (183 aa).

Belongs to the universal ribosomal protein uL5 family. In terms of assembly, part of the 50S ribosomal subunit; part of the 5S rRNA/L5/L18/L25 subcomplex. Contacts the 5S rRNA and the P site tRNA. Forms a bridge to the 30S subunit in the 70S ribosome.

Functionally, this is one of the proteins that bind and probably mediate the attachment of the 5S RNA into the large ribosomal subunit, where it forms part of the central protuberance. In the 70S ribosome it contacts protein S13 of the 30S subunit (bridge B1b), connecting the 2 subunits; this bridge is implicated in subunit movement. Contacts the P site tRNA; the 5S rRNA and some of its associated proteins might help stabilize positioning of ribosome-bound tRNAs. The polypeptide is Large ribosomal subunit protein uL5 (Leptospira biflexa serovar Patoc (strain Patoc 1 / Ames)).